A 124-amino-acid polypeptide reads, in one-letter code: Large ribosomal subunit protein bL17 (124 aa).

This sequence belongs to the bacterial ribosomal protein bL17 family. Part of the 50S ribosomal subunit. Contacts protein L32.

The protein is Large ribosomal subunit protein bL17 of Borrelia turicatae (strain 91E135).